Here is a 163-residue protein sequence, read N- to C-terminus: Large ribosomal subunit protein uL10 (163 aa).

This sequence belongs to the universal ribosomal protein uL10 family. In terms of assembly, part of the ribosomal stalk of the 50S ribosomal subunit. The N-terminus interacts with L11 and the large rRNA to form the base of the stalk. The C-terminus forms an elongated spine to which L12 dimers bind in a sequential fashion forming a multimeric L10(L12)X complex.

Its function is as follows. Forms part of the ribosomal stalk, playing a central role in the interaction of the ribosome with GTP-bound translation factors. This Glaesserella parasuis serovar 5 (strain SH0165) (Haemophilus parasuis) protein is Large ribosomal subunit protein uL10.